Reading from the N-terminus, the 229-residue chain is GTP-binding protein Di-Ras3 (229 aa).

GTP contacts are provided by residues 44 to 51, 63 to 69, 91 to 95, 152 to 155, and 182 to 183; these read GTAGVGKS, RHEYLPT, DSKSG, NKSD, and AK. The Effector region signature appears at 66–74; the sequence is YLPTIENTY. The residue at position 226 (cysteine 226) is a Cysteine methyl ester. The S-geranylgeranyl cysteine moiety is linked to residue cysteine 226. Positions 227 to 229 are cleaved as a propeptide — removed in mature form; sequence IIM.

It belongs to the small GTPase superfamily. Di-Ras family. In terms of tissue distribution, expressed in normal ovarian and breast epithelial cells but not in ovarian and breast cancers.

It is found in the cell membrane. The chain is GTP-binding protein Di-Ras3 (DIRAS3) from Homo sapiens (Human).